A 235-amino-acid chain; its full sequence is Chalcone--flavanone isomerase 1 (235 aa).

Substrate-binding residues include T50 and S192.

It belongs to the chalcone isomerase family.

It catalyses the reaction a chalcone = a flavanone.. The protein operates within secondary metabolite biosynthesis; flavonoid biosynthesis. Functionally, catalyzes the intramolecular cyclization of bicyclic chalcones into tricyclic (S)-flavanones. Responsible for the isomerization of 4,2',4',6'-tetrahydroxychalcone (also termed chalcone) into naringenin. The sequence is that of Chalcone--flavanone isomerase 1 (CHI1) from Chrysanthemum morifolium (Florist's daisy).